The primary structure comprises 169 residues: Phosphopantetheine adenylyltransferase (169 aa).

Ser-8 provides a ligand contact to substrate. Residues 8-9 (SF) and His-16 each bind ATP. Residues Lys-40, Thr-72, and Arg-86 each coordinate substrate. ATP-binding positions include 87 to 89 (GLR), Glu-97, and 122 to 128 (YSFLSSS).

Belongs to the bacterial CoaD family. Homohexamer. Requires Mg(2+) as cofactor.

It is found in the cytoplasm. It carries out the reaction (R)-4'-phosphopantetheine + ATP + H(+) = 3'-dephospho-CoA + diphosphate. The protein operates within cofactor biosynthesis; coenzyme A biosynthesis; CoA from (R)-pantothenate: step 4/5. Reversibly transfers an adenylyl group from ATP to 4'-phosphopantetheine, yielding dephospho-CoA (dPCoA) and pyrophosphate. The polypeptide is Phosphopantetheine adenylyltransferase (Cyanothece sp. (strain PCC 7425 / ATCC 29141)).